The sequence spans 29 residues: Dermaseptin-J8 (29 aa).

Expressed by the skin glands.

It is found in the secreted. Functionally, has antimicrobial activity. The chain is Dermaseptin-J8 from Phasmahyla jandaia (Jandaia leaf frog).